Consider the following 417-residue polypeptide: Carbon catabolite repressor protein 4 homolog 4 (417 aa).

Phenylalanine 2 carries the post-translational modification N-acetylserine. Glutamate 143 is a Mg(2+) binding site.

Belongs to the CCR4/nocturin family. As to quaternary structure, component of the CCR4-NOT complex, at least composed of CRR4 and CAF1 proteins. Forms homooligomers. Requires Mg(2+) as cofactor.

It is found in the nucleus. The protein localises to the cytoplasm. The enzyme catalyses Exonucleolytic cleavage of poly(A) to 5'-AMP.. Acts as a catalytic component of the CCR4-NOT core complex, which in the nucleus seems to be a general transcription factor, and in the cytoplasm the major mRNA deadenylase involved in mRNA turnover. Transcriptional regulator of circadian rhythms with poly(A)-degrading activity that affects the expression and rhythmicity of the clock core oscillator genes TOC1 and CCA1. Deadenylation may be a mechanism involved in the regulation of the circadian clock. May play a negative role in response against oxidative stress. Possesses magnesium-dependent poly(A)-specific exoribonuclease activity in vitro and is almost inactive with poly(U), poly(C) and poly(G) as substrates. This is Carbon catabolite repressor protein 4 homolog 4 from Arabidopsis thaliana (Mouse-ear cress).